The sequence spans 191 residues: Orotate phosphoribosyltransferase (191 aa).

114–122 (EDVVTTGKS) is a 5-phospho-alpha-D-ribose 1-diphosphate binding site. 2 residues coordinate orotate: threonine 118 and arginine 146.

This sequence belongs to the purine/pyrimidine phosphoribosyltransferase family. PyrE subfamily. In terms of assembly, homodimer. Mg(2+) serves as cofactor.

The enzyme catalyses orotidine 5'-phosphate + diphosphate = orotate + 5-phospho-alpha-D-ribose 1-diphosphate. It participates in pyrimidine metabolism; UMP biosynthesis via de novo pathway; UMP from orotate: step 1/2. Its function is as follows. Catalyzes the transfer of a ribosyl phosphate group from 5-phosphoribose 1-diphosphate to orotate, leading to the formation of orotidine monophosphate (OMP). This Clostridium botulinum (strain Langeland / NCTC 10281 / Type F) protein is Orotate phosphoribosyltransferase.